The primary structure comprises 163 residues: 3-hydroxyacyl-[acyl-carrier-protein] dehydratase FabZ (163 aa).

Histidine 61 is a catalytic residue.

Belongs to the thioester dehydratase family. FabZ subfamily.

It is found in the cytoplasm. It catalyses the reaction a (3R)-hydroxyacyl-[ACP] = a (2E)-enoyl-[ACP] + H2O. In terms of biological role, involved in unsaturated fatty acids biosynthesis. Catalyzes the dehydration of short chain beta-hydroxyacyl-ACPs and long chain saturated and unsaturated beta-hydroxyacyl-ACPs. The chain is 3-hydroxyacyl-[acyl-carrier-protein] dehydratase FabZ from Dinoroseobacter shibae (strain DSM 16493 / NCIMB 14021 / DFL 12).